The sequence spans 855 residues: Zinc finger protein 814 (855 aa).

One can recognise a KRAB domain in the interval 15–91; sequence VTFEDVAVNF…PMAGVSPKKA (77 aa). The C2H2-type 1; degenerate zinc finger occupies 120–142; it reads HRCEAWGNKLYDSGNFHQHQNEH. 22 C2H2-type zinc fingers span residues 242–264, 269–291, 296–318, 324–346, 352–374, 380–402, 408–430, 436–458, 464–486, 492–514, 520–542, 548–570, 576–598, 604–626, 632–654, 660–682, 688–710, 716–738, 744–766, 772–794, 800–822, and 828–850; these read YVCCECGKSFSKYASLSNHQRVH, HECGECGKSFSKYVSFSNHQRVH, YECGECGKSFSKYASFSNHQRVH, YECGECGKSFSKYVSFSNHQRVH, YECGECGKSFSQKSSLIQHQRFH, YGCEECGKSFSSEGHLRSHQRVH, FKCGECVKSFSHKRSLVHHQRVH, YQCGECGKSFSQKGNLVLHQRVH, YECGECGKSFSSKGHLRNHQQIH, YECGECGKSFSHKGTLILHQRVH, YGCGECGKSFSSIGHLRSHQRVH, YECGECGKSFSHKRSLVHHQRMH, YKCGDCGKSFNEKGHLRNHQRVH, FKCGECGKCFSHKGNLILHQHGH, YVCRECGKLFKKKSHLLVHQRIH, YACEACQKFFRNKYQLIAHQRVH, YECNDCGKSFTHSSTFCVHKRIH, YECSECGKSFAESSSFTKHKRVH, YECSECGKSFAESSSLTKHKRVH, and YKCEKCGKLFNKKSHLLVHQSSH. A Glycyl lysine isopeptide (Lys-Gly) (interchain with G-Cter in SUMO2) cross-link involves residue lysine 335. A Glycyl lysine isopeptide (Lys-Gly) (interchain with G-Cter in SUMO2) cross-link involves residue lysine 391.

The protein is Zinc finger protein 814 (ZNF814) of Homo sapiens (Human).